We begin with the raw amino-acid sequence, 349 residues long: D-alanine--D-alanine ligase (349 aa).

The region spanning 132–335 (KHVFEAVGVP…YSDLIEKLVD (204 aa)) is the ATP-grasp domain. Residue 162-217 (VEKLDFPVFVKPANMGSSVGISKVDDLADLQPALSEAYKYDNRVVIEQGVDAREIE) participates in ATP binding. Positions 289, 302, and 304 each coordinate Mg(2+).

Belongs to the D-alanine--D-alanine ligase family. Requires Mg(2+) as cofactor. Mn(2+) serves as cofactor.

It is found in the cytoplasm. The enzyme catalyses 2 D-alanine + ATP = D-alanyl-D-alanine + ADP + phosphate + H(+). The protein operates within cell wall biogenesis; peptidoglycan biosynthesis. Its function is as follows. Cell wall formation. The chain is D-alanine--D-alanine ligase from Lactococcus lactis subsp. cremoris (strain MG1363).